The following is a 538-amino-acid chain: Frizzled-4 (538 aa).

An N-terminal signal peptide occupies residues 1 to 37; the sequence is MAWQGTGPSVRGMPGGVRLRLGLLLLQLLLLQRPALG. Residues 38 to 213 lie on the Extracellular side of the membrane; sequence FGDEEERRCD…KCGYDAGLYS (176 aa). Positions 41 to 162 constitute an FZ domain; the sequence is EEERRCDPIR…NDHNHMCMEG (122 aa). Cystine bridges form between Cys46/Cys107, Cys54/Cys100, Cys91/Cys129, Cys118/Cys159, Cys122/Cys146, Cys182/Cys201, Cys205/Cys283, and Cys303/Cys378. Asn60 carries an N-linked (GlcNAc...) asparagine glycan. Asn145 is a glycosylation site (N-linked (GlcNAc...) asparagine). Residues 214 to 244 traverse the membrane as a helical segment; it reads RSAKEFTDIWMAVWASLCFISTTFTVLTFLI. Residues 245–250 lie on the Cytoplasmic side of the membrane; the sequence is DSSRFS. A helical transmembrane segment spans residues 251–276; it reads YPERPIIFLSMCYNIYSIAYIVRLTV. The Extracellular segment spans residues 277–300; the sequence is GRERISCDFEEAAEPVLIQEGLKN. A helical membrane pass occupies residues 301–334; sequence TGCAIIFLLMYFFGMASSIWWVILTLTWFLAAGL. Residues 335–337 are Cytoplasmic-facing; it reads KWG. Residues 338–366 traverse the membrane as a helical segment; that stretch reads HEAIEMHSSYFHIAAWAIPAVKTIVILIM. Residues 367 to 384 are Extracellular-facing; sequence RLVDADELTGLCYVGNQS. A glycan (N-linked (GlcNAc...) asparagine) is linked at Asn382. The helical transmembrane segment at 385 to 419 threads the bilayer; sequence LDALTGFVVAPLFTYLVIGTLFIAAGLVALFKIRS. At 420–432 the chain is on the cytoplasmic side; it reads NLQKDGTKTDKLE. A helical membrane pass occupies residues 433–461; the sequence is RLMVKIGVFSVLYTVPATCVIACYFYEIS. Topologically, residues 462 to 474 are extracellular; the sequence is NWALFRYSADDSN. Residues 475–496 traverse the membrane as a helical segment; the sequence is MAVEMLKIFMSLLVGITSGMWI. The Cytoplasmic segment spans residues 497-538; that stretch reads WSAKTLHTWQKCSNRLVNSGKVKREKRGNGWVKPGKGNETVV. A Lys-Thr-X-X-X-Trp motif, mediates interaction with the PDZ domain of Dvl family members motif is present at residues 500–505; it reads KTLHTW. Positions 536–538 match the PDZ-binding motif; sequence TVV.

Belongs to the G-protein coupled receptor Fz/Smo family. In terms of assembly, interacts with MAGI3 and NDP. Component of a complex, at least composed of TSPAN12, FZD4 and norrin (NDP). Interacts (via FZ domain) with TSKU; TSKU competes with WNT2B for binding to FZD4, inhibiting Wnt signaling and repressing peripheral eye development. Interacts with glypican GPC3. Post-translationally, ubiquitinated by ZNRF3, leading to its degradation by the proteasome.

The protein localises to the cell membrane. Its function is as follows. Receptor for Wnt proteins. Most of frizzled receptors are coupled to the beta-catenin (CTNNB1) canonical signaling pathway, which leads to the activation of disheveled proteins, inhibition of GSK-3 kinase, nuclear accumulation of beta-catenin (CTNNB1) and activation of Wnt target genes. Plays a critical role in retinal vascularization by acting as a receptor for Wnt proteins and norrin (NDP). In retina, it can be both activated by Wnt protein-binding, but also by a Wnt-independent signaling via binding of norrin (NDP), promoting in both cases beta-catenin (CTNNB1) accumulation and stimulation of LEF/TCF-mediated transcriptional programs. A second signaling pathway involving PKC and calcium fluxes has been seen for some family members, but it is not yet clear if it represents a distinct pathway or if it can be integrated in the canonical pathway, as PKC seems to be required for Wnt-mediated inactivation of GSK-3 kinase. Both pathways seem to involve interactions with G-proteins. May be involved in transduction and intercellular transmission of polarity information during tissue morphogenesis and/or in differentiated tissues. In Rattus norvegicus (Rat), this protein is Frizzled-4 (Fzd4).